A 1582-amino-acid chain; its full sequence is Hybrid PKS-NRPS synthetase TAS1 (1582 aa).

The segment at 33-387 is condensation (C) domain; it reads IPLSKVQEVL…GEDTAAASRV (355 aa). Residues 499–892 form an adenylation (A) domain region; sequence RSRAATQPDE…KLHILGRMNN (394 aa). The Carrier domain maps to 1015–1092; the sequence is NLVDRLEASI…RQAQRLSELV (78 aa). The region spanning 1127–1574 is the Ketosynthase family 3 (KS3) domain; the sequence is APLFAIVGMA…GVNAHCILAS (448 aa). Active-site for beta-ketoacyl synthase activity residues include C1294 and H1432. Residues 1460–1485 are disordered; the sequence is ESRCSSGAISPTGTEQQPSDTKQTPR. Over residues 1462–1485 the composition is skewed to polar residues; sequence RCSSGAISPTGTEQQPSDTKQTPR. N1498 (for beta-ketoacyl synthase activity) is an active-site residue.

The protein in the N-terminal section; belongs to the NRP synthetase family. It depends on pantetheine 4'-phosphate as a cofactor.

The enzyme catalyses acetoacetyl-CoA + L-isoleucine + ATP = tenuazonic acid + AMP + diphosphate + CoA + 2 H(+). Hybrid PKS-NRPS synthetase that mediates the biosynthesis of the toxin tenuazonic acid (TeA), an inhibitor of protein biosynthesis on ribosomes by suppressing the release of new protein. TAS1 alone is sufficient for TeA synthesis via the condensation of isoleucine (Ile) with acetoacetyl-CoA by the N-terminal NRPS module and subsequent cyclization conducted by the C-terminal KS domain. This is Hybrid PKS-NRPS synthetase TAS1 from Cordyceps militaris (strain CM01) (Caterpillar fungus).